Reading from the N-terminus, the 274-residue chain is Ribulose-phosphate 3-epimerase, chloroplastic (274 aa).

The N-terminal 39 residues, 1 to 39, are a transit peptide targeting the chloroplast; sequence MASPSSSSSLCSTFASPRAASLGRRLAFSSPRKAFRVRA. Position 56 (serine 56) interacts with substrate. A divalent metal cation contacts are provided by histidine 81, aspartate 83, and histidine 114. Aspartate 83 functions as the Proton acceptor in the catalytic mechanism. Substrate is bound by residues histidine 114, 192-195, 225-227, and 247-248; these read GFGG, DGG, and GS. Residue aspartate 225 coordinates a divalent metal cation. Aspartate 225 (proton donor) is an active-site residue.

It belongs to the ribulose-phosphate 3-epimerase family. Homooctamer. Co(2+) serves as cofactor. The cofactor is Fe(2+). Requires Mn(2+) as cofactor. It depends on Zn(2+) as a cofactor.

It is found in the plastid. The protein resides in the chloroplast thylakoid membrane. It carries out the reaction D-ribulose 5-phosphate = D-xylulose 5-phosphate. Its pathway is carbohydrate biosynthesis; Calvin cycle. Functionally, catalyzes the reversible epimerization of D-ribulose 5-phosphate to D-xylulose 5-phosphate. The protein is Ribulose-phosphate 3-epimerase, chloroplastic (RPE) of Oryza sativa subsp. japonica (Rice).